We begin with the raw amino-acid sequence, 352 residues long: tRNA pseudouridine synthase D (352 aa).

The active-site Nucleophile is the aspartate 81. The TRUD domain maps to 157–303 (GVPNYFGTQR…MDHERRILRL (147 aa)).

It belongs to the pseudouridine synthase TruD family.

It catalyses the reaction uridine(13) in tRNA = pseudouridine(13) in tRNA. Responsible for synthesis of pseudouridine from uracil-13 in transfer RNAs. In Pseudomonas putida (strain GB-1), this protein is tRNA pseudouridine synthase D.